Here is a 340-residue protein sequence, read N- to C-terminus: Serine/threonine-protein kinase PDIK1L (340 aa).

Positions 8–333 constitute a Protein kinase domain; that stretch reads YDLIREVGRG…LELRLVQIAF (326 aa). ATP contacts are provided by residues 14–22 and Lys37; that span reads VGRGSYGVV. The Proton acceptor role is filled by Asp164.

The protein belongs to the protein kinase superfamily. Ser/Thr protein kinase family.

The protein localises to the nucleus. It catalyses the reaction L-seryl-[protein] + ATP = O-phospho-L-seryl-[protein] + ADP + H(+). The catalysed reaction is L-threonyl-[protein] + ATP = O-phospho-L-threonyl-[protein] + ADP + H(+). In Pongo abelii (Sumatran orangutan), this protein is Serine/threonine-protein kinase PDIK1L (PDIK1L).